Reading from the N-terminus, the 456-residue chain is Gamma-glutamyl phosphate reductase (456 aa).

At S2 the chain carries N-acetylserine.

This sequence belongs to the gamma-glutamyl phosphate reductase family.

The enzyme catalyses L-glutamate 5-semialdehyde + phosphate + NADP(+) = L-glutamyl 5-phosphate + NADPH + H(+). The protein operates within amino-acid biosynthesis; L-proline biosynthesis; L-glutamate 5-semialdehyde from L-glutamate: step 2/2. Functionally, catalyzes the NADPH dependent reduction of L-gamma-glutamyl 5-phosphate into L-glutamate 5-semialdehyde and phosphate. The product spontaneously undergoes cyclization to form 1-pyrroline-5-carboxylate. The polypeptide is Gamma-glutamyl phosphate reductase (PRO2) (Saccharomyces cerevisiae (strain ATCC 204508 / S288c) (Baker's yeast)).